A 579-amino-acid polypeptide reads, in one-letter code: Fatty-acid amide hydrolase 1 (579 aa).

Residues 9–29 (AFSGPSGVALACCLVAAALAL) form a helical membrane-spanning segment. Residues 30-403 (RWSSRRMARG…GDYVDSCLGD (374 aa)) lie on the Cytoplasmic side of the membrane. The active-site Charge relay system is the Lys142. Residues Met191, Ser217, and 238 to 241 (IGGS) contribute to the substrate site. Catalysis depends on Ser217, which acts as the Charge relay system. Catalysis depends on Ser241, which acts as the Acyl-ester intermediate. Phosphoserine is present on Ser241. Residues 404 to 433 (LISILRLPKWLKGLLAFMLRPLLPRLAGFL) lie within the membrane without spanning it. Topologically, residues 434–579 (SSLRPRSAGK…RLMAPGRQPS (146 aa)) are cytoplasmic.

This sequence belongs to the amidase family. As to quaternary structure, homodimer.

Its subcellular location is the endoplasmic reticulum membrane. The protein resides in the golgi apparatus membrane. It carries out the reaction N-(5Z,8Z,11Z,14Z-eicosatetraenoyl)-ethanolamine + H2O = ethanolamine + (5Z,8Z,11Z,14Z)-eicosatetraenoate. The catalysed reaction is (9Z)-octadecenamide + H2O = (9Z)-octadecenoate + NH4(+). It catalyses the reaction 2-(5Z,8Z,11Z,14Z-eicosatetraenoyl)-glycerol + H2O = glycerol + (5Z,8Z,11Z,14Z)-eicosatetraenoate + H(+). The enzyme catalyses 1-O-methyl-(5Z,8Z,11Z,14Z)-eicosatetraenoate + H2O = methanol + (5Z,8Z,11Z,14Z)-eicosatetraenoate + H(+). It carries out the reaction (9Z,12Z,15Z)-octadecatrienamide + H2O = (9Z,12Z,15Z)-octadecatrienoate + NH4(+). The catalysed reaction is (5Z,8Z,11Z,14Z)-eicosatetraenamide + H2O = (5Z,8Z,11Z,14Z)-eicosatetraenoate + NH4(+). It catalyses the reaction (6Z)-octadecenamide + H2O = (6Z)-octadecenoate + NH4(+). The enzyme catalyses (15Z)-tetracosenamide + H2O = (15Z)-tetracosenoate + NH4(+). It carries out the reaction (8Z,11Z,14Z)-eicosatrienamide + H2O = (8Z,11Z,14Z)-eicosatrienoate + NH4(+). The catalysed reaction is (11Z,14Z,17Z)-eicosatrienamide + H2O = (11Z,14Z,17Z)-eicosatrienoate + NH4(+). It catalyses the reaction (11Z,14Z)-eicosadienamide + H2O = (11Z,14Z)-eicosadienoate + NH4(+). The enzyme catalyses (9Z,12Z)-octadecadienamide + H2O = (9Z,12Z)-octadecadienoate + NH4(+). It carries out the reaction tetradecamide + H2O = tetradecanoate + NH4(+). The catalysed reaction is N-(9Z-octadecenoyl) ethanolamine + H2O = ethanolamine + (9Z)-octadecenoate. It catalyses the reaction N-(9Z-octadecenoyl)-taurine + H2O = taurine + (9Z)-octadecenoate. The enzyme catalyses (11Z)-eicosenamide + H2O = (11Z)-eicosenoate + NH4(+). It carries out the reaction N-(9Z-hexadecenoyl) ethanolamine + H2O = (9Z)-hexadecenoate + ethanolamine. The catalysed reaction is N-octadecanoyl ethanolamine + H2O = octadecanoate + ethanolamine. It catalyses the reaction N-docosanoyl-ethanolamine + H2O = docosanoate + ethanolamine. The enzyme catalyses N-tetracosanoyl-taurine + H2O = tetracosanoate + taurine. It carries out the reaction N-(15Z-tetracosenoyl)-ethanolamine + H2O = (15Z)-tetracosenoate + ethanolamine. The catalysed reaction is N-docosanoyl-taurine + H2O = docosanoate + taurine. It catalyses the reaction N-(15Z-tetracosenoyl)-taurine + H2O = (15Z)-tetracosenoate + taurine. The enzyme catalyses N-tricosanoyl-taurine + H2O = tricosanoate + taurine. It carries out the reaction (9Z)-octadecenoate + glycine = N-(9Z-octadecenoyl)glycine + H2O. The catalysed reaction is N-(5Z,8Z,11Z,14Z)-eicosatetraenoyl-glycine + H2O = (5Z,8Z,11Z,14Z)-eicosatetraenoate + glycine. It catalyses the reaction N-(5Z,8Z,11Z,14Z-eicosatetraenoyl)-L-serine + H2O = (5Z,8Z,11Z,14Z)-eicosatetraenoate + L-serine. Inhibited by trifluoromethyl ketone. Functionally, catalyzes the hydrolysis of endogenous amidated lipids like the sleep-inducing lipid oleamide ((9Z)-octadecenamide), the endocannabinoid anandamide (N-(5Z,8Z,11Z,14Z-eicosatetraenoyl)-ethanolamine), as well as other fatty amides, to their corresponding fatty acids, thereby regulating the signaling functions of these molecules. Also catalyzes the hydrolysis of the endocannabinoid 2-arachidonoylglycerol (2-(5Z,8Z,11Z,14Z-eicosatetraenoyl)-glycerol). FAAH cooperates with PM20D1 in the hydrolysis of amino acid-conjugated fatty acids such as N-fatty acyl glycine and N-fatty acyl-L-serine, thereby acting as a physiological regulator of specific subsets of intracellular, but not of extracellular, N-fatty acyl amino acids. The polypeptide is Fatty-acid amide hydrolase 1 (FAAH) (Sus scrofa (Pig)).